The following is a 357-amino-acid chain: MVDAINPLGTDGFEFVEYTAADNTGIEQLKHLFSSLGFAEVAKHRSKEAWLYRQGDINFVVNAQPHSQAEEFAKVHGPSVCGMAFRVQDAASALKHALTNGAEEYKTEIGPMELSIPAVYGIGGSLLYFVDRYGKQSIYDVDFRFYDDAAQRLAKSDVGLYEIDHLTHNVKRGNMDTWAGFYERIGNFREIRYFDIEGKLTGLVSRAMTAPCGKIRIPINESSDDKSQIEEFIREYNGEGIQHIALTTDDIYQTVQTLRDRGMDFMPTPDTYYDKVDSRVEGHKEDVSRLRDLRILIDGAPLKDGILLQIFTQTVIGPVFFEIIQRKGNEGFGEGNFKALFESIEEDQIRRGVLNNA.

2 VOC domains span residues 12 to 132 (GFEF…FVDR) and 162 to 313 (EIDH…IFTQ). Residues His-165, His-243, and Glu-322 each contribute to the Fe cation site.

The protein belongs to the 4HPPD family. It depends on Fe cation as a cofactor.

This is Hemolysin VllY (vllY) from Vibrio vulnificus (strain CMCP6).